We begin with the raw amino-acid sequence, 2476 residues long: Non-reducing polyketide synthase pkdA (2476 aa).

An N-terminal acylcarrier protein transacylase domain (SAT) region spans residues 22–230 (PNLNDAYLQS…VISEARLATL (209 aa)). Cysteine 142 functions as the Nucleophile; for transacylase activity in the catalytic mechanism. Catalysis depends on histidine 261, which acts as the Proton donor/acceptor; for transacylase activity. One can recognise a Ketosynthase family 3 (KS3) domain in the interval 388-805 (DESIAVVGMA…GSNASLVVTQ (418 aa)). Catalysis depends on for beta-ketoacyl synthase activity residues cysteine 554, histidine 689, and histidine 728. The segment at 919 to 1204 (FGGQRSSFVG…GSGVTNLASR (286 aa)) is malonyl-CoA:ACP transacylase (MAT). The segment at 1290-1417 (QKGLWTFVGY…GRITFQTPKQ (128 aa)) is N-terminal hotdog fold. A PKS/mFAS DH domain is found at 1290-1592 (QKGLWTFVGY…FVEVSIAGMS (303 aa)). The interval 1321–1590 (YVSAHVIAQT…LHFVEVSIAG (270 aa)) is product template (PT) domain. Catalysis depends on histidine 1325, which acts as the Proton acceptor; for dehydratase activity. Residues 1445 to 1592 (QTIQGSRNIY…FVEVSIAGMS (148 aa)) form a C-terminal hotdog fold region. Catalysis depends on aspartate 1501, which acts as the Proton donor; for dehydratase activity. The segment at 1626 to 1649 (DVSKNEKDAKAPSKKKESTSKSPG) is disordered. In terms of domain architecture, Carrier spans 1650 to 1724 (HDILARVRTL…SLVKCIGANM (75 aa)). Serine 1684 carries the O-(pantetheine 4'-phosphoryl)serine modification. Positions 1727–1766 (SDTSRTGDDSSDDLETASAESETSSGINNEDSHNIDRQQI) are disordered. Residues 1742–1751 (TASAESETSS) are compositionally biased toward low complexity. Residues 1881-2030 (ELLRQYPEHA…DCEKTPSSHL (150 aa)) are methyltransferase (CMeT) domain. Residues 2094–2340 (VTGATGSLGS…SWCPVDDVAA (247 aa)) are NADPH-binding domain.

Pantetheine 4'-phosphate serves as cofactor.

It catalyses the reaction propanoyl-CoA + 3 malonyl-CoA + AH2 + 2 S-adenosyl-L-methionine + H(+) = 2-ethyl-4,6-dihydroxy-3,5-dimethylbenzaldehyde + A + 2 S-adenosyl-L-homocysteine + 3 CO2 + 4 CoA + H2O. Its pathway is secondary metabolite biosynthesis. Its function is as follows. Non-reducing polyketide synthase that synthesizes 6-ethyl-2,4-dihydroxy-3,5-dimethylbenzaldehyde via condensation of one propanoyl-CoA starter unit with 3 malonyl-CoA units, as well as 2 methylation steps. The sequence is that of Non-reducing polyketide synthase pkdA from Emericella nidulans (strain FGSC A4 / ATCC 38163 / CBS 112.46 / NRRL 194 / M139) (Aspergillus nidulans).